Consider the following 288-residue polypeptide: ATP synthase gamma chain (288 aa).

This sequence belongs to the ATPase gamma chain family. F-type ATPases have 2 components, CF(1) - the catalytic core - and CF(0) - the membrane proton channel. CF(1) has five subunits: alpha(3), beta(3), gamma(1), delta(1), epsilon(1). CF(0) has three main subunits: a, b and c.

The protein localises to the cell inner membrane. Functionally, produces ATP from ADP in the presence of a proton gradient across the membrane. The gamma chain is believed to be important in regulating ATPase activity and the flow of protons through the CF(0) complex. The protein is ATP synthase gamma chain of Paracidovorax citrulli (strain AAC00-1) (Acidovorax citrulli).